Here is a 33-residue protein sequence, read N- to C-terminus: Brevinin-2HSa (33 aa).

Residues cysteine 27 and cysteine 33 are joined by a disulfide bond.

Expressed by the skin glands.

The protein localises to the secreted. Has antibacterial activity against the Gram-positive bacterium S.aureus ATCC 25923 (MIC=18 uM) and the Gram-negative bacterium E.coli ATCC 25726 (MIC=36 uM). This Odorrana hosii (Hose's rock frog) protein is Brevinin-2HSa.